The sequence spans 1028 residues: Isoleucine--tRNA ligase (1028 aa).

Residues 51-61 (PTANGRPHIGH) carry the 'HIGH' region motif. The short motif at 591–595 (KMSKS) is the 'KMSKS' region element. Residue Lys594 coordinates ATP.

It belongs to the class-I aminoacyl-tRNA synthetase family. IleS type 2 subfamily. Monomer. Zn(2+) serves as cofactor.

It localises to the cytoplasm. It catalyses the reaction tRNA(Ile) + L-isoleucine + ATP = L-isoleucyl-tRNA(Ile) + AMP + diphosphate. Catalyzes the attachment of isoleucine to tRNA(Ile). As IleRS can inadvertently accommodate and process structurally similar amino acids such as valine, to avoid such errors it has two additional distinct tRNA(Ile)-dependent editing activities. One activity is designated as 'pretransfer' editing and involves the hydrolysis of activated Val-AMP. The other activity is designated 'posttransfer' editing and involves deacylation of mischarged Val-tRNA(Ile). The protein is Isoleucine--tRNA ligase of Thermoplasma volcanium (strain ATCC 51530 / DSM 4299 / JCM 9571 / NBRC 15438 / GSS1).